We begin with the raw amino-acid sequence, 179 residues long: Stathmin-2 (179 aa).

The membrane attachment stretch occupies residues 1-26; sequence MAKTAMAYKEKMKELSMLSLICSCFY. S16 bears the Phosphoserine mark. Residues C22 and C24 are each lipidated (S-palmitoyl cysteine). The SLD domain occupies 38-179; the sequence is DDMEVKQINK…NKELQVELSG (142 aa). Residues 39–96 form a regulatory/phosphorylation domain region; the sequence is DMEVKQINKRASGQAFELILKPPSPISEAPRTLASPKKKDLSLEEIQKKLEAAEGRRK. Phosphoserine is present on S50. A phosphoserine; by MAPK8 mark is found at S62 and S73. Residues 75-179 are a coiled coil; the sequence is KKKDLSLEEI…NKELQVELSG (105 aa). 2 positions are modified to phosphoserine: S80 and S97.

This sequence belongs to the stathmin family. In terms of assembly, interacts with ITM2C. Interacts with MAPK8. Interacts with KIFBP. Interacts (via the N-terminal region) with CIB1 (via C-terminal region); the interaction is direct, occurs in a calcium-dependent manner and attenuates the neurite outgrowth inhibition of STMN2. Post-translationally, sumoylated. In terms of processing, phosphorylated by MAPK9 and MAPK10 in the developing brain cortex. Phosphorylated mostly by MAPK8. N-terminal palmitoylation promotes specific anchoring to the cytosolic leaflet of Golgi membranes and subsequent vesicular trafficking along dendrites and axons. Neuronal Stathmins are substrates for palmitoyltransferases ZDHHC3, ZDHHC7 and ZDHHC15. Expressed in neurons (at protein level). Present in growth cones and abundant in developing neurons.

It localises to the cytoplasm. The protein localises to the perinuclear region. It is found in the cell projection. Its subcellular location is the growth cone. The protein resides in the axon. It localises to the membrane. The protein localises to the golgi apparatus. It is found in the endosome. Its subcellular location is the lamellipodium. Its function is as follows. Regulator of microtubule stability. When phosphorylated by MAPK8, stabilizes microtubules and consequently controls neurite length in cortical neurons. In the developing brain, negatively regulates the rate of exit from multipolar stage and retards radial migration from the ventricular zone. The chain is Stathmin-2 (Stmn2) from Rattus norvegicus (Rat).